The chain runs to 150 residues: 3-dehydroquinate dehydratase (150 aa).

Residue tyrosine 26 is the Proton acceptor of the active site. Substrate contacts are provided by asparagine 77, histidine 83, and aspartate 90. The active-site Proton donor is the histidine 103. Residues 104–105 (LS) and arginine 114 each bind substrate.

This sequence belongs to the type-II 3-dehydroquinase family. Homododecamer.

It carries out the reaction 3-dehydroquinate = 3-dehydroshikimate + H2O. It participates in metabolic intermediate biosynthesis; chorismate biosynthesis; chorismate from D-erythrose 4-phosphate and phosphoenolpyruvate: step 3/7. Functionally, catalyzes a trans-dehydration via an enolate intermediate. This is 3-dehydroquinate dehydratase from Pectobacterium carotovorum subsp. carotovorum (strain PC1).